The chain runs to 256 residues: Imidazole glycerol phosphate synthase subunit HisF (256 aa).

Residues Asp13 and Asp132 contribute to the active site.

The protein belongs to the HisA/HisF family. In terms of assembly, heterodimer of HisH and HisF.

It localises to the cytoplasm. The enzyme catalyses 5-[(5-phospho-1-deoxy-D-ribulos-1-ylimino)methylamino]-1-(5-phospho-beta-D-ribosyl)imidazole-4-carboxamide + L-glutamine = D-erythro-1-(imidazol-4-yl)glycerol 3-phosphate + 5-amino-1-(5-phospho-beta-D-ribosyl)imidazole-4-carboxamide + L-glutamate + H(+). Its pathway is amino-acid biosynthesis; L-histidine biosynthesis; L-histidine from 5-phospho-alpha-D-ribose 1-diphosphate: step 5/9. IGPS catalyzes the conversion of PRFAR and glutamine to IGP, AICAR and glutamate. The HisF subunit catalyzes the cyclization activity that produces IGP and AICAR from PRFAR using the ammonia provided by the HisH subunit. The polypeptide is Imidazole glycerol phosphate synthase subunit HisF (Leptospira interrogans serogroup Icterohaemorrhagiae serovar copenhageni (strain Fiocruz L1-130)).